The chain runs to 490 residues: Probable cytosol aminopeptidase (490 aa).

Mn(2+) contacts are provided by Lys-260 and Asp-265. Lys-272 is a catalytic residue. Mn(2+)-binding residues include Asp-284, Asp-343, and Glu-345. Arg-347 is an active-site residue.

It belongs to the peptidase M17 family. It depends on Mn(2+) as a cofactor.

The protein resides in the cytoplasm. It catalyses the reaction Release of an N-terminal amino acid, Xaa-|-Yaa-, in which Xaa is preferably Leu, but may be other amino acids including Pro although not Arg or Lys, and Yaa may be Pro. Amino acid amides and methyl esters are also readily hydrolyzed, but rates on arylamides are exceedingly low.. It carries out the reaction Release of an N-terminal amino acid, preferentially leucine, but not glutamic or aspartic acids.. Its function is as follows. Presumably involved in the processing and regular turnover of intracellular proteins. Catalyzes the removal of unsubstituted N-terminal amino acids from various peptides. The chain is Probable cytosol aminopeptidase from Gloeothece citriformis (strain PCC 7424) (Cyanothece sp. (strain PCC 7424)).